The following is a 128-amino-acid chain: uncharacterized protein (128 aa).

Disordered regions lie at residues 62–83 (LNPS…SPRV) and 101–128 (FAAS…RYQP). The span at 101-114 (FAASSSSTAPVTVT) shows a compositional bias: low complexity.

The protein resides in the cytoplasm. It localises to the nucleus. This is an uncharacterized protein from Saccharomyces cerevisiae (strain ATCC 204508 / S288c) (Baker's yeast).